A 336-amino-acid chain; its full sequence is Fructose-1,6-bisphosphatase class 1 (336 aa).

4 residues coordinate Mg(2+): glutamate 92, aspartate 115, leucine 117, and aspartate 118. Substrate contacts are provided by residues aspartate 118–serine 121, asparagine 211, tyrosine 244, tyrosine 262–tyrosine 264, and lysine 274. Residue glutamate 280 coordinates Mg(2+).

It belongs to the FBPase class 1 family. As to quaternary structure, homotetramer. Requires Mg(2+) as cofactor.

It localises to the cytoplasm. The enzyme catalyses beta-D-fructose 1,6-bisphosphate + H2O = beta-D-fructose 6-phosphate + phosphate. The protein operates within carbohydrate biosynthesis; gluconeogenesis. This Aliivibrio fischeri (strain MJ11) (Vibrio fischeri) protein is Fructose-1,6-bisphosphatase class 1.